Consider the following 32-residue polypeptide: Beta-hexosaminidase (32 aa).

Residues 1–32 (GKSSSRPLGDATLGDLDFDIEVTQDYWDDLAR) form the GH18 domain. Residue E21 is the Proton donor of the active site.

This sequence belongs to the glycosyl hydrolase 18 family. Chitinase class II subfamily.

The catalysed reaction is Hydrolysis of terminal non-reducing N-acetyl-D-hexosamine residues in N-acetyl-beta-D-hexosaminides.. With respect to regulation, activity is decreased by HgCl(2) and maltose. Activity is stimulated by Na(2)SeO(4), BaCl(2), MgCl(2), chondroitin 6-sulfate and phenylmethylsulfonyl fluoride. Preferentially hydrolyzes pNP-GlcNAc, hydrolyzes pNP-GalNAc to a lesser extent. In Palythoa caribaeorum (White encrusting zoanthid coral), this protein is Beta-hexosaminidase.